Here is a 408-residue protein sequence, read N- to C-terminus: Tyrosine--tRNA ligase (408 aa).

Tyrosine 35 lines the L-tyrosine pocket. Positions 40 to 49 (PTADSLHVGH) match the 'HIGH' region motif. L-tyrosine is bound by residues tyrosine 168 and glutamine 172. The 'KMSKS' region motif lies at 228 to 232 (KMGKT). Lysine 231 lines the ATP pocket. In terms of domain architecture, S4 RNA-binding spans 342-407 (INIIDLLLKT…GKKTYHRVKL (66 aa)).

It belongs to the class-I aminoacyl-tRNA synthetase family. TyrS type 1 subfamily. In terms of assembly, homodimer.

The protein localises to the cytoplasm. The catalysed reaction is tRNA(Tyr) + L-tyrosine + ATP = L-tyrosyl-tRNA(Tyr) + AMP + diphosphate + H(+). In terms of biological role, catalyzes the attachment of tyrosine to tRNA(Tyr) in a two-step reaction: tyrosine is first activated by ATP to form Tyr-AMP and then transferred to the acceptor end of tRNA(Tyr). This Acetivibrio thermocellus (strain ATCC 27405 / DSM 1237 / JCM 9322 / NBRC 103400 / NCIMB 10682 / NRRL B-4536 / VPI 7372) (Clostridium thermocellum) protein is Tyrosine--tRNA ligase.